Here is a 542-residue protein sequence, read N- to C-terminus: Putative beta-glucosidase 23 (542 aa).

A signal peptide spans 1 to 29 (MAACTSSLVSLLLLLLLLLLLLVAGEATA). An N-linked (GlcNAc...) asparagine glycan is attached at Asn34. Residue Gln88 coordinates a beta-D-glucoside. Residue Asn135 is glycosylated (N-linked (GlcNAc...) asparagine). A beta-D-glucoside is bound at residue His216. The active-site Proton donor is the Glu262. Cys281 and Cys289 are disulfide-bonded. Residue Tyr405 participates in a beta-D-glucoside binding. Asn445 carries an N-linked (GlcNAc...) asparagine glycan. A beta-D-glucoside contacts are provided by Trp476 and Phe492.

This sequence belongs to the glycosyl hydrolase 1 family.

It catalyses the reaction Hydrolysis of terminal, non-reducing beta-D-glucosyl residues with release of beta-D-glucose.. The chain is Putative beta-glucosidase 23 (BGLU23) from Oryza sativa subsp. japonica (Rice).